Consider the following 123-residue polypeptide: UPF0102 protein Csal_2201 (123 aa).

This sequence belongs to the UPF0102 family.

In Chromohalobacter salexigens (strain ATCC BAA-138 / DSM 3043 / CIP 106854 / NCIMB 13768 / 1H11), this protein is UPF0102 protein Csal_2201.